Reading from the N-terminus, the 422-residue chain is 26S proteasome non-ATPase regulatory subunit 11 (422 aa).

Positions 224–392 constitute a PCI domain; it reads DWKTAYSYFY…GVLIIFDEPP (169 aa).

The protein belongs to the proteasome subunit S9 family. In terms of assembly, component of the 19S proteasome regulatory particle complex. The 26S proteasome consists of a 20S core particle (CP) and two 19S regulatory subunits (RP). The regulatory particle is made of a lid composed of 9 subunits including PSMD11, a base containing 6 ATPases and few additional components.

It localises to the nucleus. It is found in the cytoplasm. Its subcellular location is the cytosol. In terms of biological role, component of the 26S proteasome, a multiprotein complex involved in the ATP-dependent degradation of ubiquitinated proteins. This complex plays a key role in the maintenance of protein homeostasis by removing misfolded or damaged proteins, which could impair cellular functions, and by removing proteins whose functions are no longer required. Therefore, the proteasome participates in numerous cellular processes, including cell cycle progression, apoptosis, or DNA damage repair. In the complex, PSMD11 is required for proteasome assembly. Plays a key role in increased proteasome activity in embryonic stem cells (ESCs): its high expression in ESCs promotes enhanced assembly of the 26S proteasome, followed by higher proteasome activity. This chain is 26S proteasome non-ATPase regulatory subunit 11 (psmd11), found in Xenopus tropicalis (Western clawed frog).